We begin with the raw amino-acid sequence, 726 residues long: Delta-1-pyrroline-5-carboxylate synthase B (726 aa).

Positions 1 to 296 (MTEIDRSRAF…WAPVVDTTSR (296 aa)) are glutamate 5-kinase. 3 residues coordinate substrate: serine 60, aspartate 157, and asparagine 176. ATP is bound by residues 196–197 (SD) and 236–242 (RGGMTAK). A gamma-glutamyl phosphate reductase region spans residues 297–717 (DMAVAARESS…YTHKDLPVLQ (421 aa)).

It in the N-terminal section; belongs to the glutamate 5-kinase family. The protein in the C-terminal section; belongs to the gamma-glutamyl phosphate reductase family.

It carries out the reaction L-glutamate + ATP = L-glutamyl 5-phosphate + ADP. The catalysed reaction is L-glutamate 5-semialdehyde + phosphate + NADP(+) = L-glutamyl 5-phosphate + NADPH + H(+). It participates in amino-acid biosynthesis; L-proline biosynthesis; L-glutamate 5-semialdehyde from L-glutamate: step 1/2. Its pathway is amino-acid biosynthesis; L-proline biosynthesis; L-glutamate 5-semialdehyde from L-glutamate: step 2/2. Its function is as follows. P5CS plays a key role in proline biosynthesis, leading to osmoregulation in plants. This chain is Delta-1-pyrroline-5-carboxylate synthase B (P5CSB), found in Arabidopsis thaliana (Mouse-ear cress).